Here is a 482-residue protein sequence, read N- to C-terminus: tRNA sulfurtransferase (482 aa).

Positions 61 to 165 (LAIRDALTRI…DDRLLLIKGR (105 aa)) constitute a THUMP domain. Residues 183–184 (LI), Lys-265, Gly-287, and Gln-296 each bind ATP. An intrachain disulfide couples Cys-344 to Cys-456. The Rhodanese domain maps to 404-482 (FGANDVILDI…GFANVKVYRP (79 aa)). Cys-456 acts as the Cysteine persulfide intermediate in catalysis.

This sequence belongs to the ThiI family.

The protein resides in the cytoplasm. The catalysed reaction is [ThiI sulfur-carrier protein]-S-sulfanyl-L-cysteine + a uridine in tRNA + 2 reduced [2Fe-2S]-[ferredoxin] + ATP + H(+) = [ThiI sulfur-carrier protein]-L-cysteine + a 4-thiouridine in tRNA + 2 oxidized [2Fe-2S]-[ferredoxin] + AMP + diphosphate. It catalyses the reaction [ThiS sulfur-carrier protein]-C-terminal Gly-Gly-AMP + S-sulfanyl-L-cysteinyl-[cysteine desulfurase] + AH2 = [ThiS sulfur-carrier protein]-C-terminal-Gly-aminoethanethioate + L-cysteinyl-[cysteine desulfurase] + A + AMP + 2 H(+). The protein operates within cofactor biosynthesis; thiamine diphosphate biosynthesis. Functionally, catalyzes the ATP-dependent transfer of a sulfur to tRNA to produce 4-thiouridine in position 8 of tRNAs, which functions as a near-UV photosensor. Also catalyzes the transfer of sulfur to the sulfur carrier protein ThiS, forming ThiS-thiocarboxylate. This is a step in the synthesis of thiazole, in the thiamine biosynthesis pathway. The sulfur is donated as persulfide by IscS. The chain is tRNA sulfurtransferase from Salmonella arizonae (strain ATCC BAA-731 / CDC346-86 / RSK2980).